Reading from the N-terminus, the 395-residue chain is Transcription termination/antitermination protein NusA (395 aa).

The region spanning 137–201 (NSVLMGQVIL…TKKGLLLELS (65 aa)) is the S1 motif domain. KH domains are found at residues 243–291 (SHNS…TLAL) and 331–378 (KVRL…NENE).

Belongs to the NusA family. Monomer. Binds directly to the core enzyme of the DNA-dependent RNA polymerase and to nascent RNA.

It localises to the cytoplasm. Its function is as follows. Participates in both transcription termination and antitermination. The chain is Transcription termination/antitermination protein NusA from Helicobacter pylori (strain J99 / ATCC 700824) (Campylobacter pylori J99).